A 477-amino-acid polypeptide reads, in one-letter code: AGFPEQEPEPKFWNDWAQKTLDKALSLQTLNKNKAQNLILFLGDGMGVPTVTAARILKGQLRGQPGEEGQLEMDKFPFVALSKTYNTNAQVADSAGTATAYLCGVKANEGTVGVSAAAVRSQANTTQGNEVTSILRWAKDAGKSIGIVTTTRVNHATPSAAYAHCVDRDWYSDNEMPADAVEAGCKDIARQLFENIPDIDVIMGGGRKYMYPKNTTDVEYPGQPKHSGTRKDGRNLVKEWVDRNTEKKGHYVWNKKDLLSLNPTKVDYLLGLFEPADLPYDLERNKETDPSLSEMVEVAIKILRRNPNGFYLLVEGGRIDHGHHEGKDKQAIHEAVEMDRAIGRADLMTSTSDTLTVVTADHSHLFSFGGYTPRGNEIFGLAAFISDVDQKPFTAILYGNGPGYKLVNGARENVSTVDYQDNSYLAQAAVPLSSETHGGEDVAVFAKGPMAHLLHGVHEQNYIPHAMAYAACIGQNR.

Aspartate 44 contributes to the Mg(2+) binding site. Position 44 (aspartate 44) interacts with Zn(2+). Serine 94 serves as the catalytic Phosphoserine intermediate. Asparagine 124 carries an N-linked (GlcNAc...) asparagine glycan. Mg(2+)-binding residues include histidine 155 and threonine 157. Cysteine 165 and cysteine 185 are oxidised to a cystine. Asparagine 214 carries N-linked (GlcNAc...) asparagine glycosylation. Glutamate 315 serves as a coordination point for Mg(2+). Residues aspartate 320, histidine 324, aspartate 361, and histidine 362 each coordinate Zn(2+). A glycan (N-linked (GlcNAc...) asparagine) is linked at asparagine 413. Histidine 437 is a binding site for Zn(2+).

Homodimer. Requires Mg(2+) as cofactor. It depends on Zn(2+) as a cofactor.

The protein localises to the cell membrane. The catalysed reaction is a phosphate monoester + H2O = an alcohol + phosphate. The polypeptide is Alkaline phosphatase (Gadus morhua (Atlantic cod)).